We begin with the raw amino-acid sequence, 270 residues long: Putative pyruvate, phosphate dikinase regulatory protein 2 (270 aa).

151 to 158 (GVSRTSKT) contacts ADP.

It belongs to the pyruvate, phosphate/water dikinase regulatory protein family. PDRP subfamily.

The enzyme catalyses N(tele)-phospho-L-histidyl/L-threonyl-[pyruvate, phosphate dikinase] + ADP = N(tele)-phospho-L-histidyl/O-phospho-L-threonyl-[pyruvate, phosphate dikinase] + AMP + H(+). The catalysed reaction is N(tele)-phospho-L-histidyl/O-phospho-L-threonyl-[pyruvate, phosphate dikinase] + phosphate + H(+) = N(tele)-phospho-L-histidyl/L-threonyl-[pyruvate, phosphate dikinase] + diphosphate. Its function is as follows. Bifunctional serine/threonine kinase and phosphorylase involved in the regulation of the pyruvate, phosphate dikinase (PPDK) by catalyzing its phosphorylation/dephosphorylation. This Listeria welshimeri serovar 6b (strain ATCC 35897 / DSM 20650 / CCUG 15529 / CIP 8149 / NCTC 11857 / SLCC 5334 / V8) protein is Putative pyruvate, phosphate dikinase regulatory protein 2.